The chain runs to 880 residues: Beta-glucosidase 2 (880 aa).

Positions 1–17 (MLLILELLVLIIGLGVA) are cleaved as a signal peptide. Residues Asn-24, Asn-77, and Asn-271 are each glycosylated (N-linked (GlcNAc...) asparagine). The active site involves Asp-299. 8 N-linked (GlcNAc...) asparagine glycosylation sites follow: Asn-336, Asn-343, Asn-376, Asn-548, Asn-589, Asn-712, Asn-743, and Asn-794.

The protein belongs to the glycosyl hydrolase 3 family.

It carries out the reaction Hydrolysis of terminal, non-reducing beta-D-glucosyl residues with release of beta-D-glucose.. It functions in the pathway glycan metabolism; cellulose degradation. The sequence is that of Beta-glucosidase 2 (BGL2) from Saccharomycopsis fibuligera (Yeast).